The sequence spans 191 residues: Ion-translocating oxidoreductase complex subunit B (191 aa).

Residues 1–26 are hydrophobic; sequence MSAVLIAVLALLALCLLGGAILGFAA. One can recognise a 4Fe-4S domain in the interval 32-90; the sequence is EGDPIAEQINALLPQTQCGQCGYPGCKPYAEAIAGGDKINKCPPGGEATIQALADLLDV. The [4Fe-4S] cluster site is built by Cys-49, Cys-52, Cys-57, Cys-73, Cys-114, Cys-117, Cys-120, Cys-124, Cys-144, Cys-147, Cys-150, and Cys-154. 4Fe-4S ferredoxin-type domains are found at residues 105–134 and 135–164; these read MVAY…GAAR and QMHT…MIEV.

Belongs to the 4Fe4S bacterial-type ferredoxin family. RnfB subfamily. In terms of assembly, the complex is composed of six subunits: RnfA, RnfB, RnfC, RnfD, RnfE and RnfG. [4Fe-4S] cluster serves as cofactor.

Its subcellular location is the cell inner membrane. In terms of biological role, part of a membrane-bound complex that couples electron transfer with translocation of ions across the membrane. In Stutzerimonas stutzeri (strain A1501) (Pseudomonas stutzeri), this protein is Ion-translocating oxidoreductase complex subunit B.